The sequence spans 513 residues: Maturase K (513 aa).

This sequence belongs to the intron maturase 2 family. MatK subfamily.

It localises to the plastid. Its subcellular location is the chloroplast. Usually encoded in the trnK tRNA gene intron. Probably assists in splicing its own and other chloroplast group II introns. In Danthonia spicata (Poverty oatgrass), this protein is Maturase K.